We begin with the raw amino-acid sequence, 196 residues long: Large ribosomal subunit protein eL15 (196 aa).

The tract at residues 162 to 196 is disordered; the sequence is RGLTNAGRSNRGLQNRGKGAEHTRPSAGSGSRRGK.

Belongs to the eukaryotic ribosomal protein eL15 family.

This is Large ribosomal subunit protein eL15 from Haloquadratum walsbyi (strain DSM 16790 / HBSQ001).